The primary structure comprises 356 residues: Popeye domain-containing protein 1 (356 aa).

Residues 1–48 (MNFTEPSPLAQSTVVGFLPELESLTPVPSNETSCENWREVHHLVFHAA) lie on the Extracellular side of the membrane. Residues N2 and N30 are each glycosylated (N-linked (GlcNAc...) asparagine). A helical membrane pass occupies residues 49-69 (NVCFAVGLLIPTTLHLHMILL). A topological domain (cytoplasmic) is located at residue R70. A helical membrane pass occupies residues 71–91 (VMLSIGCTLYVVWATLYRCAL). Position 92 (D92) is a topological domain, extracellular. Residues 93-113 (MMIWNSVFLGINILHLSYLLY) traverse the membrane as a helical segment. Residues 93 to 115 (MMIWNSVFLGINILHLSYLLYKK) form a required for interaction with CAV3 region. Over 114–356 (KKRPVKIEKD…VPVSPAHQLP (243 aa)) the chain is Cytoplasmic. The interval 136-186 (RVPPDLFRRLTGQFCVIQTLKRGQVYATEDKTSVDDRLSILLKGRMKVSYR) is required for interaction with KCNK2. A phosphoserine mark is found at S295 and S318. The span at 313 to 323 (SSSTASLPMSS) shows a compositional bias: low complexity. The interval 313-356 (SSSTASLPMSSPQQRASPKMKPIEEGLEDDDEVFVPVSPAHQLP) is disordered.

Belongs to the popeye family. Homodimer. Homodimerization requires the C-terminus cytoplasmic region. Interacts (via the C-terminus cytoplasmic tail) with TJP1. Interacts (via the C-terminus cytoplasmic tail) with ARHGEF25/GEFT (via the DH domain). Interacts (via the C-terminus cytoplasmic tail) with VAMP3. Interacts with KCNK2; the interaction enhances KCNK2 surface expression and is inhibited by cAMP. Interacts with CAV3. Strongly expressed in heart and skeletal muscle. Weakly expressed in brain, spleen, liver, kidney and lung.

It is found in the lateral cell membrane. It localises to the cell junction. Its subcellular location is the tight junction. The protein localises to the membrane. The protein resides in the cell membrane. It is found in the sarcolemma. It localises to the caveola. Functionally, cell adhesion molecule involved in the establishment and/or maintenance of cell integrity. Involved in the formation and regulation of the tight junction (TJ) paracellular permeability barrier in epithelial cells. Plays a role in VAMP3-mediated vesicular transport and recycling of different receptor molecules through its interaction with VAMP3. Plays a role in the regulation of cell shape and movement by modulating the Rho-family GTPase activity through its interaction with ARHGEF25/GEFT. Induces primordial adhesive contact and aggregation of epithelial cells in a Ca(2+)-independent manner. Important for skeletal muscle and heart development. Also involved in striated muscle regeneration and repair and in the regulation of cell spreading. Important for the maintenance of cardiac function. Plays a regulatory function in heart rate dynamics mediated, at least in part, through cAMP-binding and, probably, by increasing cell surface expression of the potassium channel KCNK2 and enhancing current density. Is a caveolae-associated protein important for the preservation of caveolae structural and functional integrity as well as for heart protection against ischemia injury. The protein is Popeye domain-containing protein 1 (Popdc1) of Rattus norvegicus (Rat).